A 212-amino-acid polypeptide reads, in one-letter code: MGVTCVSQIPVAEGKSVQQTVELLTRKLEMLGAEKQGTFCVDCETYHTAASTLGSQGQTGKLMYVMHNSEYPLSCFALFENGPCLIADTNFDVLMVKLKGFFQSAKASKIETRGTRYQYCDFLVKVGTVTMGPSARGISVEVEYGPCVVASDCWSLLLEFLQSFLGSHTPGAPAVFGNRHDAVYGPADTMVQYMELFNKIRKQQQVPVAGIR.

The protein belongs to the Mediator complex subunit 20 family. In terms of assembly, component of the Mediator complex, which is composed of MED1, MED4, MED6, MED7, MED8, MED9, MED10, MED11, MED12, MED13, MED13L, MED14, MED15, MED16, MED17, MED18, MED19, MED20, MED21, MED22, MED23, MED24, MED25, MED26, MED27, MED29, MED30, MED31, CCNC, CDK8 and CDC2L6/CDK11. The MED12, MED13, CCNC and CDK8 subunits form a distinct module termed the CDK8 module. Mediator containing the CDK8 module is less active than Mediator lacking this module in supporting transcriptional activation. Individual preparations of the Mediator complex lacking one or more distinct subunits have been variously termed ARC, CRSP, DRIP, PC2, SMCC and TRAP. Interacts with PPARG.

The protein localises to the nucleus. Its function is as follows. Component of the Mediator complex, a coactivator involved in the regulated transcription of nearly all RNA polymerase II-dependent genes. Mediator functions as a bridge to convey information from gene-specific regulatory proteins to the basal RNA polymerase II transcription machinery. Mediator is recruited to promoters by direct interactions with regulatory proteins and serves as a scaffold for the assembly of a functional preinitiation complex with RNA polymerase II and the general transcription factors. The protein is Mediator of RNA polymerase II transcription subunit 20 (MED20) of Macaca fascicularis (Crab-eating macaque).